The sequence spans 150 residues: MINNVVLVGRLTRDPELRHTPQNQAVGTFGLAVNRQFKNANGEREADFINCVIWRQQAENLAKFAKKGALIGITGRIQTRNYENQQGQKVYVTEVVADTFQMLESNKTQGQQTSKPQAQNKKPQAPDPFKAPAADPFAGGTEISDDDLPF.

The region spanning 1–104 is the SSB domain; the sequence is MINNVVLVGR…VVADTFQMLE (104 aa). Polar residues predominate over residues 103–120; the sequence is LESNKTQGQQTSKPQAQN. The tract at residues 103-150 is disordered; it reads LESNKTQGQQTSKPQAQNKKPQAPDPFKAPAADPFAGGTEISDDDLPF. The span at 121–138 shows a compositional bias: low complexity; sequence KKPQAPDPFKAPAADPFA. Residues 145 to 150 carry the Important for interaction with partner proteins motif; that stretch reads DDDLPF.

Homotetramer.

Its function is as follows. Plays an important role in DNA replication, recombination and repair. Binds to ssDNA and to an array of partner proteins to recruit them to their sites of action during DNA metabolism. The protein is Single-stranded DNA-binding protein 1 (ssb1) of Lactococcus lactis subsp. lactis (strain IL1403) (Streptococcus lactis).